Consider the following 432-residue polypeptide: MLLWFLSLVCSGFFLVQRMSAHVGSHDKPFLSAWPSYVVPLGQNVTLTCDSHRGSNIFKLYKEEGSPNHQLHETTFQKSQVFGPVTTEHAGTYRCFHPQYANVLSAHSEPLKIIISGIYMKPFLLILQSPLVDTGGNVTLECHSENMFDTYILISHRMGIIKNSVQVSAEHHESGSHVTYSIGPMTPDLVGTYTCYGANSYYPYEWSDSSDPIDIKITGVYKKPSLSALMGPVLMMSGETMALSCISDHQFDTFHMSREGVPRGQGMPAVQSHSGKFEAKFLLSPMIQKGNYRCYGSFRNASHVWSSPSDPLYLPAKGNCPAYTEADTKTNNYKNLHILTGLLVTMVLVVIIIFYSCYFSKQNKSQKQAAASMEQEYEVKNTINTQNFEGQERQEVTYTELEQRIFNQNLMPPISRISEFSADTIVYMEIMK.

Residues 1 to 21 (MLLWFLSLVCSGFFLVQRMSA) form the signal peptide. The Extracellular segment spans residues 22–335 (HVGSHDKPFL…ADTKTNNYKN (314 aa)). Ig-like C2-type domains lie at 42–100 (GQNV…HPQY), 135–202 (GGNV…NSYY), and 238–301 (GETM…FRNA). Asparagine 44 is a glycosylation site (N-linked (GlcNAc...) asparagine). Cysteine 49 and cysteine 95 are oxidised to a cystine. A glycan (N-linked (GlcNAc...) asparagine) is linked at asparagine 137. Cystine bridges form between cysteine 142-cysteine 195 and cysteine 245-cysteine 294. Asparagine 300 is a glycosylation site (N-linked (GlcNAc...) asparagine). The chain crosses the membrane as a helical span at residues 336-356 (LHILTGLLVTMVLVVIIIFYS). Residues 357–432 (CYFSKQNKSQ…DTIVYMEIMK (76 aa)) are Cytoplasmic-facing.

Belongs to the immunoglobulin superfamily.

Its subcellular location is the cell membrane. Functionally, receptor on natural killer (NK) cells. Inhibits the activity of NK cells thus preventing cell lysis. The sequence is that of Killer cell immunoglobulin-like receptor 3DL1 (Kir3dl1) from Mus musculus (Mouse).